A 485-amino-acid chain; its full sequence is Kynureninase 1 (485 aa).

Residues L155, T156, F183–D186, D267, H270, and Y292 each bind pyridoxal 5'-phosphate. An N6-(pyridoxal phosphate)lysine modification is found at K293. Residues W330 and N358 each coordinate pyridoxal 5'-phosphate.

It belongs to the kynureninase family. Homodimer. The cofactor is pyridoxal 5'-phosphate.

It is found in the cytoplasm. The enzyme catalyses L-kynurenine + H2O = anthranilate + L-alanine + H(+). It catalyses the reaction 3-hydroxy-L-kynurenine + H2O = 3-hydroxyanthranilate + L-alanine + H(+). Its pathway is amino-acid degradation; L-kynurenine degradation; L-alanine and anthranilate from L-kynurenine: step 1/1. It participates in cofactor biosynthesis; NAD(+) biosynthesis; quinolinate from L-kynurenine: step 2/3. Its function is as follows. Catalyzes the cleavage of L-kynurenine (L-Kyn) and L-3-hydroxykynurenine (L-3OHKyn) into anthranilic acid (AA) and 3-hydroxyanthranilic acid (3-OHAA), respectively. The protein is Kynureninase 1 (kyn-1) of Neurospora crassa (strain ATCC 24698 / 74-OR23-1A / CBS 708.71 / DSM 1257 / FGSC 987).